A 506-amino-acid polypeptide reads, in one-letter code: ATP synthase subunit alpha (506 aa).

Glycine 170–threonine 177 is an ATP binding site.

Belongs to the ATPase alpha/beta chains family. In terms of assembly, F-type ATPases have 2 components, CF(1) - the catalytic core - and CF(0) - the membrane proton channel. CF(1) has five subunits: alpha(3), beta(3), gamma(1), delta(1), epsilon(1). CF(0) has four main subunits: a(1), b(1), b'(1) and c(9-12).

Its subcellular location is the cellular thylakoid membrane. The catalysed reaction is ATP + H2O + 4 H(+)(in) = ADP + phosphate + 5 H(+)(out). Produces ATP from ADP in the presence of a proton gradient across the membrane. The alpha chain is a regulatory subunit. The sequence is that of ATP synthase subunit alpha from Synechococcus sp. (strain JA-3-3Ab) (Cyanobacteria bacterium Yellowstone A-Prime).